The chain runs to 708 residues: Fatty acid oxidation complex subunit alpha (708 aa).

Positions 1-190 (MDMEKTFNLT…KMGLVDDAVP (190 aa)) are enoyl-CoA hydratase. Residues 310–708 (QKVNKVMVLG…MAEEGTRFFS (399 aa)) are 3-hydroxyacyl-CoA dehydrogenase.

This sequence in the N-terminal section; belongs to the enoyl-CoA hydratase/isomerase family. In the central section; belongs to the 3-hydroxyacyl-CoA dehydrogenase family. Heterotetramer of two alpha chains (FadJ) and two beta chains (FadI).

The protein localises to the cytoplasm. The enzyme catalyses a (3S)-3-hydroxyacyl-CoA = a (2E)-enoyl-CoA + H2O. It catalyses the reaction a 4-saturated-(3S)-3-hydroxyacyl-CoA = a (3E)-enoyl-CoA + H2O. The catalysed reaction is a (3S)-3-hydroxyacyl-CoA + NAD(+) = a 3-oxoacyl-CoA + NADH + H(+). It carries out the reaction (3S)-3-hydroxybutanoyl-CoA = (3R)-3-hydroxybutanoyl-CoA. It functions in the pathway lipid metabolism; fatty acid beta-oxidation. In terms of biological role, catalyzes the formation of a hydroxyacyl-CoA by addition of water on enoyl-CoA. Also exhibits 3-hydroxyacyl-CoA epimerase and 3-hydroxyacyl-CoA dehydrogenase activities. The polypeptide is Fatty acid oxidation complex subunit alpha (Shewanella halifaxensis (strain HAW-EB4)).